The following is a 316-amino-acid chain: MNSRILSTGSYLPSHIRTNADLEKMVDTSDEWIVTRSGIRERRIAAEDETVATMGFEAAKNAIEAAQINPQDIELIIVATTSHSHAYPSAACQVQGLLNIDDAISFDLAAACTGFVYALSVADQFIRAGKVKKALVIGSDLNSRKLDETDRSTVVLFGDGAGAVILEASEQEGIISTHLHASADKNNALVLAQPERGIEKSGYIEMQGNETFKLAVRELSNVVEETLLANNLDKKDLDWLVPHQANLRIITATAKKLEMDMSQVVVTLDKYANNSAATVPVALDEAIRDGRIQRGQLLLLEAFGGGWTWGSALVRF.

Catalysis depends on residues Cys112 and His243. The interval 244 to 248 is ACP-binding; it reads QANLR. Residue Asn273 is part of the active site.

It belongs to the thiolase-like superfamily. FabH family. Homodimer.

The protein resides in the cytoplasm. It catalyses the reaction malonyl-[ACP] + acetyl-CoA + H(+) = 3-oxobutanoyl-[ACP] + CO2 + CoA. It functions in the pathway lipid metabolism; fatty acid biosynthesis. Catalyzes the condensation reaction of fatty acid synthesis by the addition to an acyl acceptor of two carbons from malonyl-ACP. Catalyzes the first condensation reaction which initiates fatty acid synthesis and may therefore play a role in governing the total rate of fatty acid production. Possesses both acetoacetyl-ACP synthase and acetyl transacylase activities. Its substrate specificity determines the biosynthesis of branched-chain and/or straight-chain of fatty acids. The polypeptide is Beta-ketoacyl-[acyl-carrier-protein] synthase III (Haemophilus influenzae (strain 86-028NP)).